The following is a 190-amino-acid chain: Large ribosomal subunit protein uL5 (190 aa).

It belongs to the universal ribosomal protein uL5 family. Part of the 50S ribosomal subunit; part of the 5S rRNA/L5/L18/L25 subcomplex. Contacts the 5S rRNA and the P site tRNA. Forms a bridge to the 30S subunit in the 70S ribosome.

Functionally, this is one of the proteins that bind and probably mediate the attachment of the 5S RNA into the large ribosomal subunit, where it forms part of the central protuberance. In the 70S ribosome it contacts protein S13 of the 30S subunit (bridge B1b), connecting the 2 subunits; this bridge is implicated in subunit movement. Contacts the P site tRNA; the 5S rRNA and some of its associated proteins might help stabilize positioning of ribosome-bound tRNAs. This is Large ribosomal subunit protein uL5 from Bifidobacterium adolescentis (strain ATCC 15703 / DSM 20083 / NCTC 11814 / E194a).